A 349-amino-acid chain; its full sequence is Kelch domain-containing protein 9 (349 aa).

Kelch repeat units follow at residues 39 to 89 (RFYL…PVDG), 91 to 137 (WLCV…SHTC), and 325 to 349 (QLYLVGGFGEDGRTASPQVCILDFI).

As to quaternary structure, interacts with CCNA1.

The protein is Kelch domain-containing protein 9 (KLHDC9) of Homo sapiens (Human).